The primary structure comprises 64 residues: DNA gyrase inhibitor YacG (64 aa).

Positions 9, 12, 28, and 32 each coordinate Zn(2+). Residues 45 to 64 form a disordered region; the sequence is KRIPSSGDLSESDDWSEEQK. Acidic residues predominate over residues 54-64; the sequence is SESDDWSEEQK.

It belongs to the DNA gyrase inhibitor YacG family. In terms of assembly, interacts with GyrB. Zn(2+) serves as cofactor.

Its function is as follows. Inhibits all the catalytic activities of DNA gyrase by preventing its interaction with DNA. Acts by binding directly to the C-terminal domain of GyrB, which probably disrupts DNA binding by the gyrase. This Citrobacter koseri (strain ATCC BAA-895 / CDC 4225-83 / SGSC4696) protein is DNA gyrase inhibitor YacG.